The chain runs to 387 residues: MEQVVIVDAIRTPMGRSKGGAFRHVRAEDLSAHLMRSLLSRNPSLEASAIDDIYWGCVQQTLEQGFNIARNAALLAEIPHSVPANTVNRLCGSSMQALHDAARMIMTGDAGVCLIGGVEHMGHVPMSHGVDFHPGLSRNVAKAAGMMGLTAEMLARLHGISREMQDQFAARSHARAWAATQSGAFKAEIIPTGGHDADGVLKSFNYDEVIRPETTVETLSTLKPAFDPVTGTVTAGTSSALSDGAAAMLLMSESRARELGLKPRARVRSMAVVGCDPSIMGYGPVPASKLALKKAGLSTSDIDVFEMNEAFAAQILPCIKDLGLMEQIDEKINLNGGAIALGHPLGCSGARISTTLINQMERKDAQFGLATMCIGLGQGIATVFERV.

Cys-91 serves as the catalytic Acyl-thioester intermediate. Residues His-343 and Cys-373 each act as proton acceptor in the active site.

It belongs to the thiolase-like superfamily. Thiolase family. Heterotetramer of two alpha chains (FadB) and two beta chains (FadA).

The protein localises to the cytoplasm. The catalysed reaction is an acyl-CoA + acetyl-CoA = a 3-oxoacyl-CoA + CoA. The protein operates within lipid metabolism; fatty acid beta-oxidation. Functionally, catalyzes the final step of fatty acid oxidation in which acetyl-CoA is released and the CoA ester of a fatty acid two carbons shorter is formed. In Klebsiella pneumoniae subsp. pneumoniae (strain ATCC 700721 / MGH 78578), this protein is 3-ketoacyl-CoA thiolase.